A 955-amino-acid polypeptide reads, in one-letter code: MASSQEKAKTGVLRNAAALLDEMQLMGETQGAKKVINSELWHACAGPLVCLPQRGSLVYYFPQGHSEQVAATTRKIPNSRIPNYPNLPSQLLCQVHNITLHADKDTDEVYAQMTLQPVNSETDVFPIPTLGAYTKSKHPTEYFCKNLTASDTSTHGGFSVPRRAAEKLFPQLDYSMQPPNQELIVRDLHDNMWTFRHIYRGQPKRHLLTTGWSLFVGAKRLKAGDSVLFIRDEKSQLLLGVRRATRQQTMLSSSVLSTDSMHIGVLAAAAHAASSGSSFTIYYNPRTSPSPFVIPVARYNKATYMQPSVGMRFAMMFETEESSKRRYTGTVVGISDYDPMRWPNSKWRNLQVEWDEHGYGERPERVSIWDIETPENTLVFPSSTLNSKRQCLPGYGVSVPGMEIGSANMSSFPRAQGNPYGSLQHIPAVGSELAIMLLNQSGQTLGSPLSFHQSSYSSIIQNVKQNYIPPLTVSTSACLTKQESLPSDDAQHQFHMANMQNGDLEGSEVQPVIDSISESKLNATSRDPRNTDSYTSRSTSEQNSKGEPRGKTRRSKKGLPHKTVSEKSDLSSAPSWICDNQQVGLESKLVGCDEQVNCGNIEDSSGALTQGNFVGQPHGHQVEQKGVLSPPKVESSKSPDGGKSVNSFPNQGCFSQFIDGLDWMTQPSYYQDSNVIQPAGVSENIFSSSADIPPSMIADTMETFQASCLSDCLPNSIQEFISSPDLNSLTFLSPDMQNLEVQLQHDGSNLPSTSNSFVQMSFSEESASQSANLSGLHMESTHRSINTTSCSQPMSTGGFDAGMYSKLPRLKESQILSLPEIHTNSMGTSACSMDATEYSLDRSAKPMKPPVRTYTKVQKQGSVGRSIDVTGFRNYHELRSAIACMFGLQGKLEHPGSSEWKLVYVDYENDVLLVGDDPWEEFINCVRCIRILSPSEVQQMSENGMHVLNDCIQAA.

A DNA-binding region (TF-B3) is located at residues 143–245 (FCKNLTASDT…QLLLGVRRAT (103 aa)). The span at 518-543 (ESKLNATSRDPRNTDSYTSRSTSEQN) shows a compositional bias: polar residues. 2 disordered regions span residues 518 to 573 (ESKL…LSSA) and 609 to 646 (TQGN…KSVN). The span at 551–560 (KTRRSKKGLP) shows a compositional bias: basic residues. Residues 852–936 (RTYTKVQKQG…RCIRILSPSE (85 aa)) enclose the PB1 domain.

This sequence belongs to the ARF family. In terms of assembly, homodimers and heterodimers.

The protein resides in the nucleus. Functionally, auxin response factors (ARFs) are transcriptional factors that bind specifically to the DNA sequence 5'-TGTCTC-3' found in the auxin-responsive promoter elements (AuxREs). This is Auxin response factor 11 (ARF11) from Oryza sativa subsp. indica (Rice).